The chain runs to 396 residues: MSVRLVLAKGREKSLLRRHPWVFSGTVARMEGKASLGETIDIVDHQGKWLARGAYSPASQIRARVWTFDPSESIDIAFFSRRLQQAQKWRDWLAQKDGLDSYRLIAGESDGLPGITIDRFGNFLVLQLLSAGAEYQRAALVSALQTLYPECAIYDRSDVAVRKKEGMELTLGLVTGELPPALLPIEEHGMKLLVDIQHGHKTGYYLDQRDSRLATRRYVENKRVLNCFSYTGGFAVSALMGGCSQVVSVDTSQEALDIARQNVELNKLDLSKAEFVRDDVFKLLRTYRDRGEKFDVIVMDPPKFVENKSQLMGACRGYKDINMLAIQLLNEGGILLTFSCSGLMTSDLFQKIIADAAIDAGRDVQFIEQFRQAADHPVIATYPEGLYLKGFACRVM.

Residues 2-81 enclose the PUA domain; that stretch reads SVRLVLAKGR…ESIDIAFFSR (80 aa).

The protein belongs to the methyltransferase superfamily. RlmI family.

It localises to the cytoplasm. It catalyses the reaction cytidine(1962) in 23S rRNA + S-adenosyl-L-methionine = 5-methylcytidine(1962) in 23S rRNA + S-adenosyl-L-homocysteine + H(+). Specifically methylates the cytosine at position 1962 (m5C1962) of 23S rRNA. This is Ribosomal RNA large subunit methyltransferase I from Shigella boydii serotype 18 (strain CDC 3083-94 / BS512).